A 210-amino-acid chain; its full sequence is Thymidylate kinase (210 aa).

10–17 (GPEGAGKS) contacts ATP.

This sequence belongs to the thymidylate kinase family.

The catalysed reaction is dTMP + ATP = dTDP + ADP. In terms of biological role, phosphorylation of dTMP to form dTDP in both de novo and salvage pathways of dTTP synthesis. In Pseudomonas aeruginosa (strain LESB58), this protein is Thymidylate kinase.